Consider the following 317-residue polypeptide: Melanocyte-stimulating hormone receptor (317 aa).

The Extracellular segment spans residues 1–37 (MRVQGSQRRLLGSLNSTPTATPHLGLAANQTGARCLE). Asparagine 29 carries an N-linked (GlcNAc...) asparagine glycan. The chain crosses the membrane as a helical span at residues 38–63 (VSIPDGLFLSLGLVSLVENVLVVTAI). At 64–72 (AKNRNLHSP) the chain is on the cytoplasmic side. A helical transmembrane segment spans residues 73 to 93 (MYCFICCLALSDLLVSGSNML). The Extracellular portion of the chain corresponds to 94 to 118 (ETAVTLLLEAGALAARAAVVQQLDN). A helical membrane pass occupies residues 119–140 (VIDVITCSSMLSSLCFLGAIAV). Residues 141-163 (DRYISIFYALRYHSIVTLPRARR) lie on the Cytoplasmic side of the membrane. Residues 164-183 (AIAAIWVASVLCSTLFIAYY) form a helical membrane-spanning segment. Over 184–191 (DHAAVLLC) the chain is Extracellular. The chain crosses the membrane as a helical span at residues 192–211 (LVVFFLAMLVLMAVLYVHML). At 212–240 (ARACQHAQGIARLHKRQRLAHQGFGLKGA) the chain is on the cytoplasmic side. A helical membrane pass occupies residues 241-266 (ATLTILLGIFFLCWGPFFLHLTLIVL). Topologically, residues 267–279 (CPQHPTCSCIFKN) are extracellular. The helical transmembrane segment at 280–300 (FNLFLALIICNAIIDPLIYAF) threads the bilayer. Residues 301–317 (RSQELRRTLKEVLLCSW) are Cytoplasmic-facing. Residue cysteine 315 is the site of S-palmitoyl cysteine attachment.

The protein belongs to the G-protein coupled receptor 1 family. Interacts with MGRN1, but does not undergo MGRN1-mediated ubiquitination; this interaction competes with GNAS-binding and thus inhibits agonist-induced cAMP production. Interacts with OPN3; the interaction results in a decrease in MC1R-mediated cAMP signaling and ultimately a decrease in melanin production in melanocytes.

It is found in the cell membrane. Functionally, receptor for MSH (alpha, beta and gamma) and ACTH. The activity of this receptor is mediated by G proteins which activate adenylate cyclase. Mediates melanogenesis, the production of eumelanin (black/brown) and phaeomelanin (red/yellow), via regulation of cAMP signaling in melanocytes. This Macaca nigra (Celebes black macaque) protein is Melanocyte-stimulating hormone receptor (MC1R).